Reading from the N-terminus, the 130-residue chain is Small ribosomal subunit protein uS8 (130 aa).

It belongs to the universal ribosomal protein uS8 family. As to quaternary structure, part of the 30S ribosomal subunit.

One of the primary rRNA binding proteins, it binds directly to 16S rRNA central domain where it helps coordinate assembly of the platform of the 30S subunit. This is Small ribosomal subunit protein uS8 from Thermococcus kodakarensis (strain ATCC BAA-918 / JCM 12380 / KOD1) (Pyrococcus kodakaraensis (strain KOD1)).